Here is a 520-residue protein sequence, read N- to C-terminus: 3-phosphoshikimate 1-carboxyvinyltransferase, chloroplastic (520 aa).

Residues Met1–Glu76 constitute a chloroplast transit peptide. 3-phosphoshikimate contacts are provided by Lys99, Ser100, and Arg104. Residue Lys99 coordinates phosphoenolpyruvate. 2 residues coordinate phosphoenolpyruvate: Gly177 and Arg207. Residues Ser254, Ser255, Gln256, Ser282, Asp407, and Lys434 each contribute to the 3-phosphoshikimate site. Gln256 serves as a coordination point for phosphoenolpyruvate. The active-site Proton acceptor is Asp407. Phosphoenolpyruvate contacts are provided by Arg438, Arg480, and Lys505.

Belongs to the EPSP synthase family.

It localises to the plastid. The protein localises to the chloroplast. It carries out the reaction 3-phosphoshikimate + phosphoenolpyruvate = 5-O-(1-carboxyvinyl)-3-phosphoshikimate + phosphate. It participates in metabolic intermediate biosynthesis; chorismate biosynthesis; chorismate from D-erythrose 4-phosphate and phosphoenolpyruvate: step 6/7. In terms of biological role, catalyzes the transfer of the enolpyruvyl moiety of phosphoenolpyruvate (PEP) to the 5-hydroxyl of shikimate-3-phosphate (S3P) to produce enolpyruvyl shikimate-3-phosphate and inorganic phosphate. This chain is 3-phosphoshikimate 1-carboxyvinyltransferase, chloroplastic, found in Solanum lycopersicum (Tomato).